We begin with the raw amino-acid sequence, 294 residues long: MQIRRRPPNPAVEVDILRYQVPDPNGKANHILEEIVWHKEKEVERMRDRLSLLDLRKQEQSAPPAKDFLGAISQGKTQPALIAEVKKASPSKGVIREDFEPVAIAQAYVQGGASCLSVLTDSKFFQGSFDNLALVRQAVDIPLLCKEFIIYPYQIYLARVKGADAILLIAAILKDSDLQYLIKIIHGLGMTPLVEVHSLAELDRVLAIEGVSLVGINNRNLETFEVSLETTTNLITARQDEIKERGIYIVSESGIHTPQHLQQVTEAGANAVLIGESLVKQDDPTQAIANLFSF.

Belongs to the TrpC family.

The catalysed reaction is 1-(2-carboxyphenylamino)-1-deoxy-D-ribulose 5-phosphate + H(+) = (1S,2R)-1-C-(indol-3-yl)glycerol 3-phosphate + CO2 + H2O. It functions in the pathway amino-acid biosynthesis; L-tryptophan biosynthesis; L-tryptophan from chorismate: step 4/5. The chain is Indole-3-glycerol phosphate synthase from Crocosphaera subtropica (strain ATCC 51142 / BH68) (Cyanothece sp. (strain ATCC 51142)).